The primary structure comprises 315 residues: HTH-type transcriptional regulator TreR (315 aa).

Residues 5–59 (LTIKDIARLSGVGKSTVSRVLNNESGVSQLTRERVEAVMNQHGFSPSRSARAMRG) form the HTH lacI-type domain. A DNA-binding region (H-T-H motif) is located at residues 7-26 (IKDIARLSGVGKSTVSRVLN). Residues 71-77 (RLDSLSE), Gly-126, Arg-147, 187-190 (DVTT), Arg-194, Thr-242, and Tyr-284 each bind alpha,alpha-trehalose 6-phosphate.

Homodimer.

Repressor of the treBC operon. It is able to bind trehalose-6-phosphate and trehalose. In Escherichia coli (strain K12), this protein is HTH-type transcriptional regulator TreR (treR).